The following is a 185-amino-acid chain: Ribosome-recycling factor (185 aa).

Belongs to the RRF family.

It is found in the cytoplasm. Functionally, responsible for the release of ribosomes from messenger RNA at the termination of protein biosynthesis. May increase the efficiency of translation by recycling ribosomes from one round of translation to another. The chain is Ribosome-recycling factor from Methylobacillus flagellatus (strain ATCC 51484 / DSM 6875 / VKM B-1610 / KT).